A 1151-amino-acid chain; its full sequence is Calcium-activated potassium channel subunit alpha-1 (1151 aa).

The tract at residues 1 to 36 (MSSNIHANHLSLDASSSSSSSSSSSSSSSSSSSVHE) is disordered. At 1 to 59 (MSSNIHANHLSLDASSSSSSSSSSSSSSSSSSSVHEPKMDALIIPVTMEVPCDSRGQRM) the chain is on the extracellular side. Low complexity predominate over residues 15 to 33 (SSSSSSSSSSSSSSSSSSS). Residues 60-80 (WWAFLASSMVTFFGGLFIILL) form a helical membrane-spanning segment. Over 81–151 (WRTLKYLWTV…MISAQTLTGR (71 aa)) the chain is Cytoplasmic. 3 S-palmitoyl cysteine lipidation sites follow: Cys91, Cys92, and Cys94. A helical transmembrane segment spans residues 152–172 (VLVVLVFALSIGALVIYFIDS). Residues 173–187 (SNPIESCQNFYKDFT) lie on the Extracellular side of the membrane. Residues 188–208 (LQIDMAFNVFFLLYFGLRFIA) form a helical membrane-spanning segment. The Cytoplasmic portion of the chain corresponds to 209–212 (ANDK). A helical membrane pass occupies residues 213–233 (LWFWLEVNSVVDFFTVPPVFV). Topologically, residues 234–237 (SVYL) are extracellular. Residues 238–258 (NRSWLGLRFLRALRLIQFSEI) form a helical; Voltage-sensor membrane-spanning segment. Residues 259 to 273 (LQFLNILKTSNSIKL) lie on the Cytoplasmic side of the membrane. A helical membrane pass occupies residues 274-294 (VNLLSIFISTWLTAAGFIHLV). The Extracellular segment spans residues 295 to 308 (ENSGDPWENFQNNQ). The pore-forming intramembrane region spans 309–331 (ALTYWECVYLLMVTMSTVGYGDV). Positions 325–328 (TVGY) match the Selectivity for potassium motif. Residues 332–340 (YAKTTLGRL) lie on the Extracellular side of the membrane. Residues 341–361 (FMVFFILGGLAMFASYVPEII) form a helical membrane-spanning segment. Residues 362–1151 (ELIGNRKKYG…KQKYVQEERL (790 aa)) are Cytoplasmic-facing. In terms of domain architecture, RCK N-terminal 1 spans 380–522 (RKHIVVCGHI…WNWKEGDDAI (143 aa)). Residues Glu412, Gln435, and Glu437 each coordinate Mg(2+). The tract at residues 529-549 (LGFIAQSCLAQGLSTMLANLF) is segment S7. A segment S8 region spans residues 586–606 (LSFPTVCELCFVKLKLLMIAI). Positions 650–654 (CKACH) are heme-binding motif. Residues 674-702 (EQPSTLSPKKKQRNGGMRNSPNSSPKLMR) are disordered. The residue at position 678 (Thr678) is a Phosphothreonine. Phosphoserine occurs at positions 680, 693, and 697. Positions 752–772 (VLSGHVVVCIFGDVSSALIGL) are segment S9. In terms of domain architecture, RCK N-terminal 2 spans 754–898 (SGHVVVCIFG…MDRSSPDNSP (145 aa)). Residue Thr885 is modified to Phosphothreonine. A phosphoserine mark is found at Ser893 and Ser897. Residues 918–940 (TELVNDTNVQFLDQDDDDDPDTE) carry the Calcium bowl motif. Positions 927, 930, 933, and 935 each coordinate Ca(2+). Residues 947 to 967 (FACGTAFAVSVLDSLMSATYF) form a segment S10 region. The span at 1101–1126 (RASLSHSSHSSQSSSKKSSSVHSIPS) shows a compositional bias: low complexity. The segment at 1101–1151 (RASLSHSSHSSQSSSKKSSSVHSIPSTANRQNRPKSRESRDKQKYVQEERL) is disordered. The span at 1135-1151 (KSRESRDKQKYVQEERL) shows a compositional bias: basic and acidic residues. A phosphoserine mark is found at Ser1136 and Ser1139.

Belongs to the potassium channel family. Calcium-activated (TC 1.A.1.3) subfamily. KCa1.1/KCNMA1 sub-subfamily. In terms of assembly, homotetramer; which constitutes the calcium-activated potassium channel. Interacts with beta subunits KCNMB1, KCNMB2, KCNMB3 and KCNMB4. Interacts with gamma subunits LRRC26, LRRC38, LRRC52 and LRRC55. Beta and gamma subunits are accessory, and modulate its activity. Interacts with RAB11B. Post-translationally, phosphorylated. Phosphorylation by kinases such as PKA and/or PKG. In smooth muscles, phosphorylation affects its activity. Palmitoylation by ZDHHC22 and ZDHHC23 within the intracellular linker between the S0 and S1 transmembrane domains regulates localization to the plasma membrane. Depalmitoylated by LYPLA1 and LYPLAL1, leading to retard exit from the trans-Golgi network.

The protein resides in the cell membrane. It carries out the reaction K(+)(in) = K(+)(out). With respect to regulation, ethanol and carbon monoxide-bound heme increase channel activation. Heme inhibits channel activation. Its function is as follows. Potassium channel activated by both membrane depolarization or increase in cytosolic Ca(2+) that mediates export of K(+). It is also activated by the concentration of cytosolic Mg(2+). Its activation dampens the excitatory events that elevate the cytosolic Ca(2+) concentration and/or depolarize the cell membrane. It therefore contributes to repolarization of the membrane potential. Plays a key role in controlling excitability in a number of systems, such as regulation of the contraction of smooth muscle, the tuning of hair cells in the cochlea, regulation of transmitter release, and innate immunity. In smooth muscles, its activation by high level of Ca(2+), caused by ryanodine receptors in the sarcoplasmic reticulum, regulates the membrane potential. In cochlea cells, its number and kinetic properties partly determine the characteristic frequency of each hair cell and thereby helps to establish a tonotopic map. Kinetics of KCNMA1 channels are determined by alternative splicing, phosphorylation status and its combination with modulating beta subunits. Highly sensitive to both iberiotoxin (IbTx) and charybdotoxin (CTX). In Macaca mulatta (Rhesus macaque), this protein is Calcium-activated potassium channel subunit alpha-1 (KCNMA1).